A 107-amino-acid chain; its full sequence is Iron-sulfur cluster assembly protein CyaY (107 aa).

The protein belongs to the frataxin family.

Its function is as follows. Involved in iron-sulfur (Fe-S) cluster assembly. May act as a regulator of Fe-S biogenesis. This Neisseria meningitidis serogroup B (strain ATCC BAA-335 / MC58) protein is Iron-sulfur cluster assembly protein CyaY.